The chain runs to 84 residues: U1-hexatoxin-Iw1a (84 aa).

Positions 1-18 (MLKFVVVICLVIMAITFA) are cleaved as a signal peptide. 5 disulfides stabilise this stretch: C21/C32, C26/C40, C31/C66, C50/C74, and C68/C81.

The protein belongs to the MIT-like AcTx family. In terms of tissue distribution, expressed by the venom gland.

It localises to the secreted. This Illawarra wisharti (Illawarra funnel-web spider) protein is U1-hexatoxin-Iw1a.